A 201-amino-acid polypeptide reads, in one-letter code: L(+)-tartrate dehydratase subunit beta (201 aa).

His-37 is a catalytic residue.

It belongs to the class-I fumarase family. In terms of assembly, heterotetramer of two alpha and two beta subunits.

The catalysed reaction is (2R,3R)-tartrate = oxaloacetate + H2O. The protein is L(+)-tartrate dehydratase subunit beta (ttdB) of Shigella sonnei (strain Ss046).